A 500-amino-acid polypeptide reads, in one-letter code: Aspartyl/glutamyl-tRNA(Asn/Gln) amidotransferase subunit B (500 aa).

This sequence belongs to the GatB/GatE family. GatB subfamily. In terms of assembly, heterotrimer of A, B and C subunits.

The catalysed reaction is L-glutamyl-tRNA(Gln) + L-glutamine + ATP + H2O = L-glutaminyl-tRNA(Gln) + L-glutamate + ADP + phosphate + H(+). The enzyme catalyses L-aspartyl-tRNA(Asn) + L-glutamine + ATP + H2O = L-asparaginyl-tRNA(Asn) + L-glutamate + ADP + phosphate + 2 H(+). Allows the formation of correctly charged Asn-tRNA(Asn) or Gln-tRNA(Gln) through the transamidation of misacylated Asp-tRNA(Asn) or Glu-tRNA(Gln) in organisms which lack either or both of asparaginyl-tRNA or glutaminyl-tRNA synthetases. The reaction takes place in the presence of glutamine and ATP through an activated phospho-Asp-tRNA(Asn) or phospho-Glu-tRNA(Gln). The polypeptide is Aspartyl/glutamyl-tRNA(Asn/Gln) amidotransferase subunit B (Thermosynechococcus vestitus (strain NIES-2133 / IAM M-273 / BP-1)).